We begin with the raw amino-acid sequence, 488 residues long: Probable glycine dehydrogenase (decarboxylating) subunit 2 (488 aa).

Position 274 is an N6-(pyridoxal phosphate)lysine (K274).

It belongs to the GcvP family. C-terminal subunit subfamily. In terms of assembly, the glycine cleavage system is composed of four proteins: P, T, L and H. In this organism, the P 'protein' is a heterodimer of two subunits. It depends on pyridoxal 5'-phosphate as a cofactor.

The enzyme catalyses N(6)-[(R)-lipoyl]-L-lysyl-[glycine-cleavage complex H protein] + glycine + H(+) = N(6)-[(R)-S(8)-aminomethyldihydrolipoyl]-L-lysyl-[glycine-cleavage complex H protein] + CO2. Functionally, the glycine cleavage system catalyzes the degradation of glycine. The P protein binds the alpha-amino group of glycine through its pyridoxal phosphate cofactor; CO(2) is released and the remaining methylamine moiety is then transferred to the lipoamide cofactor of the H protein. This is Probable glycine dehydrogenase (decarboxylating) subunit 2 from Listeria welshimeri serovar 6b (strain ATCC 35897 / DSM 20650 / CCUG 15529 / CIP 8149 / NCTC 11857 / SLCC 5334 / V8).